The sequence spans 629 residues: DNA mismatch repair protein MutL (629 aa).

This sequence belongs to the DNA mismatch repair MutL/HexB family.

Functionally, this protein is involved in the repair of mismatches in DNA. It is required for dam-dependent methyl-directed DNA mismatch repair. May act as a 'molecular matchmaker', a protein that promotes the formation of a stable complex between two or more DNA-binding proteins in an ATP-dependent manner without itself being part of a final effector complex. The polypeptide is DNA mismatch repair protein MutL (Haemophilus influenzae (strain 86-028NP)).